The sequence spans 375 residues: Nucleosome assembly protein 1-like 4 (375 aa).

A disordered region spans residues 1–31 (MADHSFSDGVPSDSVEAAKNASNTEKLTDQV). Ala-2 bears the N-acetylalanine mark. Ser-5, Ser-7, and Ser-12 each carry phosphoserine. Positions 20–31 (NASNTEKLTDQV) are enriched in polar residues. Residue Thr-51 is modified to Phosphothreonine. Residues Ser-53 and Ser-54 each carry the phosphoserine modification. At Thr-58 the chain carries Phosphothreonine. Position 105 is an N6-acetyllysine (Lys-105). The disordered stretch occupies residues 116–137 (PTDAESEWHSENEEEEKLAGDM). The segment covering 121-137 (SEWHSENEEEEKLAGDM) has biased composition (basic and acidic residues). Phosphoserine is present on Ser-125. Lys-146 is subject to N6-acetyllysine. Positions 265 to 271 (IKKKQKH) match the Nuclear localization signal motif. Residue Ser-304 is modified to Phosphoserine. The tract at residues 339 to 375 (AIEDDDNFEEGEEGEEEELEGDEEGEDEDDAEINPKV) is disordered.

Belongs to the nucleosome assembly protein (NAP) family. In terms of assembly, interacts with core (H2A, CD2APH2B, H3, H4) and linker (H1) histones. As to quaternary structure, (Microbial infection) Interacts with Chikungunya virus non-structural protein 3 (via C-terminus). Phosphorylated at the G0/G1 boundary but it is not phosphorylated in S-phase. Phosphorylated protein remains in the cytoplasm in a complex with histones during the G0/G1 transition, whereas dephosphorylation triggers its transport into the nucleus at the G1/S-boundary. In terms of processing, polyglutamylated by TTLL4, a modification that occurs exclusively on glutamate residues and results in polyglutamate chains on the gamma-carboxyl group. Some residues may also be monoglycylated but not polyglycylated due to the absence of functional TTLL10 in human. As to expression, ubiquitous. Biallelically expressed in fetal and adult tissues. Highest levels in testis.

It is found in the nucleus. The protein resides in the cytoplasm. In terms of biological role, acts as a histone chaperone in nucleosome assembly. This chain is Nucleosome assembly protein 1-like 4, found in Homo sapiens (Human).